The chain runs to 809 residues: Lon protease (809 aa).

A Lon N-terminal domain is found at 20–216 (LPLLALRDVV…ELMNYLMNQS (197 aa)). 369–376 (GPPGVGKT) lines the ATP pocket. A Lon proteolytic domain is found at 606-787 (EAQVGRVNGL…DEILPLALTS (182 aa)). Residues S693 and K736 contribute to the active site.

The protein belongs to the peptidase S16 family. As to quaternary structure, homohexamer. Organized in a ring with a central cavity.

Its subcellular location is the cytoplasm. It catalyses the reaction Hydrolysis of proteins in presence of ATP.. In terms of biological role, ATP-dependent serine protease that mediates the selective degradation of mutant and abnormal proteins as well as certain short-lived regulatory proteins. Required for cellular homeostasis and for survival from DNA damage and developmental changes induced by stress. Degrades polypeptides processively to yield small peptide fragments that are 5 to 10 amino acids long. Binds to DNA in a double-stranded, site-specific manner. The polypeptide is Lon protease (Acinetobacter baumannii (strain AB307-0294)).